We begin with the raw amino-acid sequence, 345 residues long: Growth hormone-inducible transmembrane protein (345 aa).

The transit peptide at 1 to 45 (MLAARLVCLRTLPSRVFHPAFTKASPVVKNSITKNQWLLTPSREY) directs the protein to the mitochondrion. Over 46–82 (ATKTRIGIRRGRTGQELKEAALEPSMEKIFKIDQMGR) the chain is Mitochondrial matrix. A helical membrane pass occupies residues 83 to 103 (WFVAGGAAVGLGALCYYGLGL). The Mitochondrial intermembrane portion of the chain corresponds to 104-125 (SNEIGAIEKAVIWPQYVKDRIH). Residues 126 to 146 (STYMYLAGSIGLTALSAIAIS) traverse the membrane as a helical segment. The Mitochondrial matrix portion of the chain corresponds to 147-159 (RTPVLMNFMMRGS). Residues 160 to 180 (WVTIGVTFAAMVGAGMLVRSI) traverse the membrane as a helical segment. At 181-190 (PYDQSPGPKH) the chain is on the mitochondrial intermembrane side. The helical transmembrane segment at 191-211 (LAWLLHSGVMGAVVAPLTILG) threads the bilayer. The Mitochondrial matrix portion of the chain corresponds to 212–213 (GP). A helical transmembrane segment spans residues 214 to 234 (LLIRAAWYTAGIVGGLSTVAM). Topologically, residues 235-244 (CAPSEKFLNM) are mitochondrial intermembrane. A helical membrane pass occupies residues 245–265 (GAPLGVGLGLVFVSSLGSMFL). Topologically, residues 266–271 (PPTTVA) are mitochondrial matrix. A helical membrane pass occupies residues 272 to 292 (GATLYSVAMYGGLVLFSMFLL). The Mitochondrial intermembrane segment spans residues 293 to 345 (YDTQKVIKRAEVSPMYGVQKYDPINSMLSIYMDTLNIFMRVATMLATGGNRKK).

Belongs to the BI1 family. In terms of assembly, interacts with LETM1. Interacts with AFG3L2. Undergoes AFG3L2-mediated proteolytic degradation, upon hyperpolarization of mitochondria.

Its subcellular location is the mitochondrion inner membrane. The enzyme catalyses Ca(2+)(in) + 2 H(+)(out) = Ca(2+)(out) + 2 H(+)(in). It catalyses the reaction K(+)(in) + H(+)(out) = K(+)(out) + H(+)(in). Plays an important role in maintenance of mitochondrial morphology and in mediating either calcium or potassium/proton antiport. Mediates proton-dependent calcium efflux from mitochondrion. Also functions as an electroneutral mitochondrial proton/potassium exchanger. Required for the mitochondrial tubular network and cristae organization. Involved in apoptotic release of cytochrome c. Inhibits the proteolytic activity of AFG3L2, stimulating respiration and stabilizing respiratory enzymes in actively respiring mitochondria. However, when mitochondria become hyperpolarized, GHITM loses its inhibitory activity toward AFG3L2 and the now the active AFG3L2 turns first on GHITM and, if hyperpolarization persists, on other proteins of the mitochondria, leading to a broad remodeling of the mitochondrial proteome. This is Growth hormone-inducible transmembrane protein (GHITM) from Homo sapiens (Human).